We begin with the raw amino-acid sequence, 418 residues long: Vasopressin V1a receptor (418 aa).

The disordered stretch occupies residues 1-43; that stretch reads MRLSAGPDAGPSGNSSPWWPLATGAGNTSREAEALGEGNGPPR. The Extracellular segment spans residues 1 to 52; that stretch reads MRLSAGPDAGPSGNSSPWWPLATGAGNTSREAEALGEGNGPPRDVRNEELAK. The N-linked (GlcNAc...) asparagine glycan is linked to N27. Residues 53–76 form a helical membrane-spanning segment; that stretch reads LEIAVLAVTFAVAVLGNSSVLLAL. Topologically, residues 77 to 88 are cytoplasmic; sequence HRTPRKTSRMHL. Residues 89-110 form a helical membrane-spanning segment; the sequence is FIRHLSLADLAVAFFQVLPQMC. Residues 111–125 lie on the Extracellular side of the membrane; it reads WDITYRFRGPDWLCR. C124 and C203 are oxidised to a cystine. Residues 126–147 form a helical membrane-spanning segment; that stretch reads VVKHLQVFGMFASAYMLVVMTA. The Cytoplasmic segment spans residues 148–168; the sequence is DRYIAVCHPLKTLQQPARRSR. Residues 169–190 traverse the membrane as a helical segment; that stretch reads LMIAAAWVLSFVLSTPQYFVFS. At 191–218 the chain is on the extracellular side; the sequence is MIEVNNVTKARDCWATFIQPWGSRAYVT. N-linked (GlcNAc...) asparagine glycosylation occurs at N196. Residues 219–239 traverse the membrane as a helical segment; sequence WMTGGIFVAPVVILGTCYGFI. Residues 240–293 are Cytoplasmic-facing; the sequence is CYNIWCNVRGKTASRQSKGAEQAGVAFQKGFLLAPCVSSVKSISRAKIRTVKMT. Residues 294–313 traverse the membrane as a helical segment; that stretch reads FVIVTAYIVCWAPFFIIQMW. At 314–331 the chain is on the extracellular side; sequence SVWDPMSVWTESENPTIT. The helical transmembrane segment at 332–351 threads the bilayer; that stretch reads ITALLGSLNSCCNPWIYMFF. Topologically, residues 352 to 418 are cytoplasmic; it reads SGHLLQDCVQ…KSIKFIPVST (67 aa). 2 S-palmitoyl cysteine lipidation sites follow: C365 and C366. A disordered region spans residues 377 to 410; the sequence is DTDSMSRRQTFYSNNRSPTNSTGMWKDSPKSSKS. A compositionally biased stretch (polar residues) spans 383-399; the sequence is RRQTFYSNNRSPTNSTG. S404 carries the phosphoserine modification.

Belongs to the G-protein coupled receptor 1 family. Vasopressin/oxytocin receptor subfamily.

It localises to the cell membrane. Its function is as follows. Receptor for arginine vasopressin. The activity of this receptor is mediated by G proteins which activate a phosphatidyl-inositol-calcium second messenger system. Has been involved in social behaviors, including affiliation and attachment. This Homo sapiens (Human) protein is Vasopressin V1a receptor (AVPR1A).